Reading from the N-terminus, the 545-residue chain is Chaperonin GroEL (545 aa).

ATP-binding positions include 30–33 (TLGP), Lys51, 87–91 (DGTTT), Gly415, and Asp495.

This sequence belongs to the chaperonin (HSP60) family. In terms of assembly, forms a cylinder of 14 subunits composed of two heptameric rings stacked back-to-back. Interacts with the co-chaperonin GroES.

The protein localises to the cytoplasm. It catalyses the reaction ATP + H2O + a folded polypeptide = ADP + phosphate + an unfolded polypeptide.. Functionally, together with its co-chaperonin GroES, plays an essential role in assisting protein folding. The GroEL-GroES system forms a nano-cage that allows encapsulation of the non-native substrate proteins and provides a physical environment optimized to promote and accelerate protein folding. This chain is Chaperonin GroEL, found in Shewanella sp. (strain ANA-3).